We begin with the raw amino-acid sequence, 76 residues long: Conotoxin Vc6.6 (76 aa).

The first 22 residues, 1–22, serve as a signal peptide directing secretion; it reads MKLTCMVIVAVLFLTANTFVTA. A propeptide spanning residues 23-52 is cleaved from the precursor; sequence VPHSSNALENLYLKAHHEMNNPKDSELNKR. Disulfide bonds link Cys-53-Cys-67, Cys-60-Cys-71, and Cys-66-Cys-75.

Belongs to the conotoxin O1 superfamily. In terms of tissue distribution, expressed by the venom duct.

It localises to the secreted. In Conus victoriae (Queen Victoria cone), this protein is Conotoxin Vc6.6.